Here is a 419-residue protein sequence, read N- to C-terminus: Acyl-[acyl-carrier-protein] desaturase 6, chloroplastic (419 aa).

A chloroplast-targeting transit peptide spans 1 to 54 (MAATATMAMPLANRLRCKPNTNSSSPSRTLFGRRVTMISSSRWGSAVSGSAIMS). Fe cation-binding residues include E151, E189, H192, E242, E277, and H280.

It belongs to the fatty acid desaturase type 2 family. As to quaternary structure, homodimer. The cofactor is Fe(2+).

The protein localises to the plastid. The protein resides in the chloroplast. It participates in lipid metabolism; fatty acid metabolism. Its function is as follows. Introduces a cis double bond in the acyl chain of an acyl-[acyl-carrier protein]. This is Acyl-[acyl-carrier-protein] desaturase 6, chloroplastic from Oryza sativa subsp. japonica (Rice).